A 493-amino-acid chain; its full sequence is MTELNKLTVADSVKGLKNKDFTSKELVNAHIKQIEKYKNLNAYVTETFDLALKQAEEADQNYAQNKARTLEGIPFAVKDLFCTKGIRTTACSNILKNFIPHYESSVTKNIFDKGGVMLGKTNMDEFAMGSTNITSCFGNVISPWKANDDNSDLVPGGSSGGSAAAVSGFMASAALGSDTGGSVRQPASFTGLVGFKPTYGRCSRYGMVSFASSLDQAGIFTRSVLDSSIMLEAMMGFDEKDSTSINAKVPELQSAIGSSMKNMKIGVPLSLGEGGIIEHDIMKMWHDTIELLKNAGAEIVDITLPHAKYGVAVYYVIAPAEAASNLSRYDGVRYGLRVEYENMTLDEMYEMTRSAGFGEEVKRRIMLGTYVLSSNCMDAYYFKAQKVRRLVANDFNNAFTKVNAILLPTAPSAAFKIGEKQNDPTIMYLNDLFTIPASLAGLPCVSVPAGLSARGLPLGMQIIGKQLDEYNVLKVASTIETGVKHIKFEPAGF.

Catalysis depends on charge relay system residues lysine 78 and serine 158. The Acyl-ester intermediate role is filled by serine 182.

The protein belongs to the amidase family. GatA subfamily. Heterotrimer of A, B and C subunits.

It carries out the reaction L-glutamyl-tRNA(Gln) + L-glutamine + ATP + H2O = L-glutaminyl-tRNA(Gln) + L-glutamate + ADP + phosphate + H(+). Allows the formation of correctly charged Gln-tRNA(Gln) through the transamidation of misacylated Glu-tRNA(Gln) in organisms which lack glutaminyl-tRNA synthetase. The reaction takes place in the presence of glutamine and ATP through an activated gamma-phospho-Glu-tRNA(Gln). This Rickettsia typhi (strain ATCC VR-144 / Wilmington) protein is Glutamyl-tRNA(Gln) amidotransferase subunit A.